The chain runs to 481 residues: MRFLLQSITLVAAARAASIDLESLFGPYVSPETEIAEVGDADFDEVVSPRWSEWRPPTWTGAIKPQTEEDLQEIVRIAVANNVSFMATSGGHGTSLIYGTVKGLDINLANFNNVDIDLESNTVTVGAGAKLGDITEPLYKAGKAIQTARGNSPCVGVIGATIGGGIGYETGLFGLGVDALVSVRIITATGELITANETCNSDLLWAIRGAGANFGIITAATFKMFDQPNNGDAVIGTFVYNSSKSLGVFEYLSVLDNVLPPELGVQLSIGYDRTINETLLTVDIKHFAPWATFVDHWEHAEALGPISRNVSNVTLVELYAGLDGPCQTGAYVSGGTVGLGRTDAATMQEVFDDMTAFYEQYPGYLGQSLFQRYANNNTLKTPAHTAVYPWRDTKMFWLHENIFLNPELEAPTNELLVSLREKLHATSGFPADQPHIYVNYAFGDEGPEAWWSKENLPKLSYLKRKWDPKGVFGKGTPIPRF.

Positions 1 to 16 are cleaved as a signal peptide; the sequence is MRFLLQSITLVAAARA. Residues 52–227 enclose the FAD-binding PCMH-type domain; that stretch reads SEWRPPTWTG…TAATFKMFDQ (176 aa). The N-linked (GlcNAc...) asparagine glycan is linked to N82. H92 carries the post-translational modification Pros-8alpha-FAD histidine. N196, N241, N276, N309, N312, and N376 each carry an N-linked (GlcNAc...) asparagine glycan.

This sequence belongs to the oxygen-dependent FAD-linked oxidoreductase family. FAD is required as a cofactor.

Functionally, FAD-linked oxidoreductase; part of the gene cluster that mediates the biosynthesis of asperfuranone, a probable antitumor agent. The polyketide synthase afoG is responsible for producing the 3,5-dimethyloctadienone moiety from acetyl-CoA, three malonyl-CoA, and two S-adenosyl methionines (SAM). The 3,5-dimethyloctadienone moiety is then loaded onto the SAT domain of afoE and extended with four malonyl-CoA and one SAM, which leads to the formation of 2,4-dihydroxy-6-(5,7-dimethyl-2-oxo-trans-3-trans-5-nonadienyl)-3-methylbenzaldehyde (compound 2) after reductive release and aldol condensation. AfoD is the next enzyme in the biosynthesis sequence and hydroxylates the side chain at the benzylic position of compound 2. After benzylic hydroxylation, a furan ring is formed after five-member ring hemiacetal formation and water elimination. AfoF and afoC are proposed to oxidize the R-diketone proton and to reduce the unconjugated carbonyl group, respectively, to generate asperfuranone. Since no intermediates could be isolated from afoF and afoC deletants, the sequence of these two enzymes is not fully understood. Moreover, since afoC deletant still produces a small amount of asperfuranone, other endogenous oxidoreductases might catalyze the same reaction with much less efficiency. This chain is FAD-linked oxidoreductase afoF, found in Emericella nidulans (strain FGSC A4 / ATCC 38163 / CBS 112.46 / NRRL 194 / M139) (Aspergillus nidulans).